A 91-amino-acid chain; its full sequence is Small ribosomal subunit protein uS19c (91 aa).

Belongs to the universal ribosomal protein uS19 family.

The protein localises to the plastid. Its subcellular location is the organellar chromatophore. In terms of biological role, protein S19 forms a complex with S13 that binds strongly to the 16S ribosomal RNA. This chain is Small ribosomal subunit protein uS19c, found in Paulinella chromatophora.